A 205-amino-acid chain; its full sequence is Holliday junction branch migration complex subunit RuvA (205 aa).

The interval 1–64 is domain I; that stretch reads MIGRLRGVLV…EDAQLLYGFI (64 aa). A domain II region spans residues 65-143; sequence TKQERALFRL…SLLETSAGSE (79 aa). Residues 144 to 156 are flexible linker; sequence REFMLKSNYTPAP. The interval 157–205 is domain III; the sequence is VVNTAEEDAIAALLSLGYKPAQASKAVSAAFKEGMSSEDLIKSSLKSML.

It belongs to the RuvA family. Homotetramer. Forms an RuvA(8)-RuvB(12)-Holliday junction (HJ) complex. HJ DNA is sandwiched between 2 RuvA tetramers; dsDNA enters through RuvA and exits via RuvB. An RuvB hexamer assembles on each DNA strand where it exits the tetramer. Each RuvB hexamer is contacted by two RuvA subunits (via domain III) on 2 adjacent RuvB subunits; this complex drives branch migration. In the full resolvosome a probable DNA-RuvA(4)-RuvB(12)-RuvC(2) complex forms which resolves the HJ.

It localises to the cytoplasm. Its function is as follows. The RuvA-RuvB-RuvC complex processes Holliday junction (HJ) DNA during genetic recombination and DNA repair, while the RuvA-RuvB complex plays an important role in the rescue of blocked DNA replication forks via replication fork reversal (RFR). RuvA specifically binds to HJ cruciform DNA, conferring on it an open structure. The RuvB hexamer acts as an ATP-dependent pump, pulling dsDNA into and through the RuvAB complex. HJ branch migration allows RuvC to scan DNA until it finds its consensus sequence, where it cleaves and resolves the cruciform DNA. The sequence is that of Holliday junction branch migration complex subunit RuvA from Shewanella woodyi (strain ATCC 51908 / MS32).